A 444-amino-acid polypeptide reads, in one-letter code: 3-isopropylmalate dehydratase large subunit (444 aa).

Residues C348, C408, and C411 each contribute to the [4Fe-4S] cluster site.

The protein belongs to the aconitase/IPM isomerase family. LeuC type 1 subfamily. In terms of assembly, heterodimer of LeuC and LeuD. Requires [4Fe-4S] cluster as cofactor.

It carries out the reaction (2R,3S)-3-isopropylmalate = (2S)-2-isopropylmalate. Its pathway is amino-acid biosynthesis; L-leucine biosynthesis; L-leucine from 3-methyl-2-oxobutanoate: step 2/4. Catalyzes the isomerization between 2-isopropylmalate and 3-isopropylmalate, via the formation of 2-isopropylmaleate. In Buchnera aphidicola subsp. Uroleucon ambrosiae, this protein is 3-isopropylmalate dehydratase large subunit.